Here is a 698-residue protein sequence, read N- to C-terminus: Methionine--tRNA ligase (698 aa).

Residues 21–31 (PYANGPLHFGH) carry the 'HIGH' region motif. Residues Cys-153, Cys-156, Cys-166, and Cys-169 each contribute to the Zn(2+) site. The short motif at 341-345 (QFSKS) is the 'KMSKS' region element. Lys-344 is a binding site for ATP. A tRNA-binding domain is found at 599-698 (DFRKLDLRVG…EDVAPGSLVS (100 aa)).

It belongs to the class-I aminoacyl-tRNA synthetase family. MetG type 1 subfamily. Homodimer. Zn(2+) serves as cofactor.

It localises to the cytoplasm. The catalysed reaction is tRNA(Met) + L-methionine + ATP = L-methionyl-tRNA(Met) + AMP + diphosphate. In terms of biological role, is required not only for elongation of protein synthesis but also for the initiation of all mRNA translation through initiator tRNA(fMet) aminoacylation. This Protochlamydia amoebophila (strain UWE25) protein is Methionine--tRNA ligase.